The chain runs to 683 residues: Methionine--tRNA ligase (683 aa).

A 'HIGH' region motif is present at residues 14-24 (PYANGSIHLGH). Residues C145, C148, C158, and C161 each coordinate Zn(2+). Positions 331–335 (KMSKS) match the 'KMSKS' region motif. Residue K334 participates in ATP binding. A tRNA-binding domain is found at 581-683 (AFAAVDLRVA…SGAKPGQRIK (103 aa)).

It belongs to the class-I aminoacyl-tRNA synthetase family. MetG type 1 subfamily. In terms of assembly, homodimer. Requires Zn(2+) as cofactor.

Its subcellular location is the cytoplasm. It carries out the reaction tRNA(Met) + L-methionine + ATP = L-methionyl-tRNA(Met) + AMP + diphosphate. Functionally, is required not only for elongation of protein synthesis but also for the initiation of all mRNA translation through initiator tRNA(fMet) aminoacylation. The polypeptide is Methionine--tRNA ligase (Pseudomonas fluorescens (strain SBW25)).